The following is a 334-amino-acid chain: Phospho-N-acetylmuramoyl-pentapeptide-transferase (334 aa).

10 consecutive transmembrane segments (helical) span residues 2 to 22 (IPVLVAAGVAFLVTLVLGPVV), 55 to 75 (VIFLFGAAAAVLVVAFLPGGV), 78 to 98 (GWIEGLLVLAVALGFGVLGFM), 116 to 136 (EKLLGQVLIAVALAVTAVFVL), 154 to 174 (GLALDLGWWFFLGVTVFVVLA), 187 to 207 (GLAAGTFAVAALAFAMIALVM), 211 to 231 (WVGIVLGALVGGCVGFLCYNF), 236 to 256 (VFMGDTGSLALGGGLSAAAVI), 262 to 282 (FLLIIGGVFVIETLSVIIQVI), and 311 to 331 (VVLTFWTVGLVLAVLGLAGLK).

Belongs to the glycosyltransferase 4 family. MraY subfamily. It depends on Mg(2+) as a cofactor.

Its subcellular location is the cell membrane. It carries out the reaction UDP-N-acetyl-alpha-D-muramoyl-L-alanyl-gamma-D-glutamyl-meso-2,6-diaminopimeloyl-D-alanyl-D-alanine + di-trans,octa-cis-undecaprenyl phosphate = di-trans,octa-cis-undecaprenyl diphospho-N-acetyl-alpha-D-muramoyl-L-alanyl-D-glutamyl-meso-2,6-diaminopimeloyl-D-alanyl-D-alanine + UMP. It functions in the pathway cell wall biogenesis; peptidoglycan biosynthesis. Functionally, catalyzes the initial step of the lipid cycle reactions in the biosynthesis of the cell wall peptidoglycan: transfers peptidoglycan precursor phospho-MurNAc-pentapeptide from UDP-MurNAc-pentapeptide onto the lipid carrier undecaprenyl phosphate, yielding undecaprenyl-pyrophosphoryl-MurNAc-pentapeptide, known as lipid I. This chain is Phospho-N-acetylmuramoyl-pentapeptide-transferase, found in Desulforudis audaxviator (strain MP104C).